The primary structure comprises 407 residues: 1-deoxy-D-xylulose 5-phosphate reductoisomerase (407 aa).

6 residues coordinate NADPH: threonine 25, glycine 26, serine 27, isoleucine 28, asparagine 53, and asparagine 136. Lysine 137 contributes to the 1-deoxy-D-xylulose 5-phosphate binding site. Glutamate 138 lines the NADPH pocket. Aspartate 162 lines the Mn(2+) pocket. Residues serine 163, glutamate 164, serine 188, and histidine 211 each contribute to the 1-deoxy-D-xylulose 5-phosphate site. Glutamate 164 serves as a coordination point for Mn(2+). Glycine 217 is an NADPH binding site. The 1-deoxy-D-xylulose 5-phosphate site is built by serine 224, asparagine 229, lysine 230, and glutamate 233. Residue glutamate 233 coordinates Mn(2+).

This sequence belongs to the DXR family. The cofactor is Mg(2+). Mn(2+) is required as a cofactor.

It catalyses the reaction 2-C-methyl-D-erythritol 4-phosphate + NADP(+) = 1-deoxy-D-xylulose 5-phosphate + NADPH + H(+). It functions in the pathway isoprenoid biosynthesis; isopentenyl diphosphate biosynthesis via DXP pathway; isopentenyl diphosphate from 1-deoxy-D-xylulose 5-phosphate: step 1/6. Catalyzes the NADPH-dependent rearrangement and reduction of 1-deoxy-D-xylulose-5-phosphate (DXP) to 2-C-methyl-D-erythritol 4-phosphate (MEP). In Rhodopseudomonas palustris (strain BisB5), this protein is 1-deoxy-D-xylulose 5-phosphate reductoisomerase.